The primary structure comprises 51 residues: Large ribosomal subunit protein eL39y (51 aa).

A disordered region spans residues 1–21; the sequence is MPSHKSFMIKKKLGKKMRQNR. Residues 7-19 show a composition bias toward basic residues; the sequence is FMIKKKLGKKMRQ.

The protein belongs to the eukaryotic ribosomal protein eL39 family.

The polypeptide is Large ribosomal subunit protein eL39y (RPL39B) (Arabidopsis thaliana (Mouse-ear cress)).